Reading from the N-terminus, the 371-residue chain is Opine oxidase subunit B (371 aa).

Heterodimer of a subunit A and a subunit B.

It functions in the pathway opine metabolism; octopine degradation. Oxidative cleavage of octopine into L-arginine and pyruvate. In Agrobacterium tumefaciens (strain Ach5), this protein is Opine oxidase subunit B (ooxB).